The sequence spans 114 residues: Large ribosomal subunit protein uL22 (114 aa).

This sequence belongs to the universal ribosomal protein uL22 family. Part of the 50S ribosomal subunit.

This protein binds specifically to 23S rRNA; its binding is stimulated by other ribosomal proteins, e.g. L4, L17, and L20. It is important during the early stages of 50S assembly. It makes multiple contacts with different domains of the 23S rRNA in the assembled 50S subunit and ribosome. Functionally, the globular domain of the protein is located near the polypeptide exit tunnel on the outside of the subunit, while an extended beta-hairpin is found that lines the wall of the exit tunnel in the center of the 70S ribosome. This is Large ribosomal subunit protein uL22 from Alcanivorax borkumensis (strain ATCC 700651 / DSM 11573 / NCIMB 13689 / SK2).